Here is a 207-residue protein sequence, read N- to C-terminus: Calcipressin-like protein (207 aa).

The required for tax-6 interaction stretch occupies residues 176-181; the sequence is PAIIVH.

The protein belongs to the RCAN family. As to quaternary structure, interacts with tax-6 (via catalytic domain); the interaction is calcium-dependent. Expressed in lateral hypodermal cells, marginal cells of the pharynx, vulva epithelial cells, ventral and dorsal nerve cords and commissures and various neurons in the anterior and posterior regions. Expressed in male tail structures including the diagonal muscles, sensory rays and spicules. Expressed in PHC neurons and most tail neurons and support cells of the phasmid neurons. Also expressed in pharyngeal muscle, head neurons, excretory canal cells and hypodermal seam cells.

Its function is as follows. Inhibits tax-6/calcineurin A phosphatase activity and thereby negatively regulates calcineurin-mediated functions. Plays a role in modulating temperature-dependent calcium responses in AFD neurons and in addition, also negatively regulates thermotaxis in a tax-6-dependent manner in AFD neurons. In response to changes in intracellular calcium levels may also regulate nuclear translocation of transcriptional regulators such as crtc-1. May play a role in regulating body size. Plays a role in male tail tip morphogenesis. The chain is Calcipressin-like protein from Caenorhabditis elegans.